We begin with the raw amino-acid sequence, 1074 residues long: Topoisomerase 1-associated factor 1 (1074 aa).

2 disordered regions span residues 572-595 (NTHKKRKERQAASQANADREQRKI) and 936-1074 (EEPP…DRET). Composition is skewed to basic residues over residues 948 to 962 (LLRRKARATRRRRRS) and 978 to 991 (GHQHKKNPRQKRAK). A compositionally biased stretch (basic and acidic residues) spans 1014–1031 (EATRRFFENEERLRREMD). Residues 1046 to 1055 (VKRKRGKKNG) show a composition bias toward basic residues.

This sequence belongs to the timeless family.

The protein localises to the nucleus. Its function is as follows. Involved in chromosome segregation during meiosis and DNA damage repair. This is Topoisomerase 1-associated factor 1 (TOF1) from Cryptococcus neoformans var. neoformans serotype D (strain JEC21 / ATCC MYA-565) (Filobasidiella neoformans).